A 365-amino-acid polypeptide reads, in one-letter code: D-alanine--D-alanine ligase (365 aa).

Positions 135–345 (KLLLKSFNIP…YESLVDNLVS (211 aa)) constitute an ATP-grasp domain. Residue 168–223 (KQSLNYPVIVKPAMLGSSIGISIAYNDTQIEKCIEEAFEYDLTVVVEKFMKVREIE) participates in ATP binding. Positions 298, 312, and 314 each coordinate Mg(2+).

This sequence belongs to the D-alanine--D-alanine ligase family. Mg(2+) is required as a cofactor. Requires Mn(2+) as cofactor.

It is found in the cytoplasm. It catalyses the reaction 2 D-alanine + ATP = D-alanyl-D-alanine + ADP + phosphate + H(+). It functions in the pathway cell wall biogenesis; peptidoglycan biosynthesis. In terms of biological role, cell wall formation. This chain is D-alanine--D-alanine ligase, found in Borrelia hermsii (strain HS1 / DAH).